The chain runs to 572 residues: Flagellin A (572 aa).

The protein belongs to the bacterial flagellin family. As to quaternary structure, heteromer of FlaA and FlaB. Interacts with FliW.

Its subcellular location is the secreted. The protein resides in the bacterial flagellum. Its function is as follows. Flagellin is the subunit protein which polymerizes to form the filaments of bacterial flagella. FlaA binds to flagellar assembly factor FliW protein, preventing FliW from binding to CsrA, so that CsrA can then bind flaA mRNA and represses its translation. The sequence is that of Flagellin A (flaA) from Campylobacter jejuni subsp. jejuni serotype O:2 (strain ATCC 700819 / NCTC 11168).